We begin with the raw amino-acid sequence, 254 residues long: SLA class II histocompatibility antigen, DQ haplotype C alpha chain (254 aa).

The N-terminal stretch at M1–G23 is a signal peptide. The tract at residues E24–K120 is alpha-1. Residues E24–E216 are Extracellular-facing. Residues N104 and N144 are each glycosylated (N-linked (GlcNAc...) asparagine). Residues P113–E204 enclose the Ig-like C1-type domain. The alpha-2 stretch occupies residues S121–W203. The cysteines at positions 133 and 188 are disulfide-linked. Positions E204–E216 are connecting peptide. A helical membrane pass occupies residues T217–I239. Residues Q240–L254 are Cytoplasmic-facing.

Belongs to the MHC class II family.

It is found in the membrane. The protein is SLA class II histocompatibility antigen, DQ haplotype C alpha chain of Sus scrofa (Pig).